Reading from the N-terminus, the 78-residue chain is Bowman-Birk type proteinase inhibitors I-A, I-B, and I-A' (78 aa).

Intrachain disulfides connect C18/C72, C19/C34, C22/C68, C24/C32, C42/C49, C46/C61, and C51/C59.

Belongs to the Bowman-Birk serine protease inhibitor family.

Functionally, these inhibitors strongly inhibit trypsin. The protein is Bowman-Birk type proteinase inhibitors I-A, I-B, and I-A' of Phaseolus angularis (Azuki bean).